The chain runs to 114 residues: Hydrogenase maturation factor HypA (114 aa).

His2 lines the Ni(2+) pocket. The Zn(2+) site is built by Cys73, Cys76, Cys90, and Cys93.

Belongs to the HypA/HybF family.

Its function is as follows. Involved in the maturation of [NiFe] hydrogenases. Required for nickel insertion into the metal center of the hydrogenase. The sequence is that of Hydrogenase maturation factor HypA from Chloroflexus aurantiacus (strain ATCC 29366 / DSM 635 / J-10-fl).